Consider the following 59-residue polypeptide: Small ribosomal subunit protein bS21 (59 aa).

A disordered region spans residues 39 to 59 (ETPVEKYKRKQRLKNRTKRRR). The segment covering 45-59 (YKRKQRLKNRTKRRR) has biased composition (basic residues).

Belongs to the bacterial ribosomal protein bS21 family.

This is Small ribosomal subunit protein bS21 from Prochlorococcus marinus (strain SARG / CCMP1375 / SS120).